The primary structure comprises 212 residues: Methylthioribulose-1-phosphate dehydratase (212 aa).

Zn(2+) contacts are provided by His-99 and His-101.

It belongs to the aldolase class II family. MtnB subfamily. Homotetramer. It depends on Zn(2+) as a cofactor.

The catalysed reaction is 5-(methylsulfanyl)-D-ribulose 1-phosphate = 5-methylsulfanyl-2,3-dioxopentyl phosphate + H2O. It participates in amino-acid biosynthesis; L-methionine biosynthesis via salvage pathway; L-methionine from S-methyl-5-thio-alpha-D-ribose 1-phosphate: step 2/6. In terms of biological role, catalyzes the dehydration of methylthioribulose-1-phosphate (MTRu-1-P) into 2,3-diketo-5-methylthiopentyl-1-phosphate (DK-MTP-1-P). This chain is Methylthioribulose-1-phosphate dehydratase, found in Bacillus pumilus (strain SAFR-032).